The following is a 290-amino-acid chain: Enoyl-CoA hydratase, mitochondrial (290 aa).

The transit peptide at 1-29 directs the protein to the mitochondrion; the sequence is MAALRALLPRACNSLLSPVRCPEFRRFAS. Residue 98 to 101 participates in substrate binding; it reads ADIK. N6-acetyllysine; alternate occurs at positions 101 and 115. N6-succinyllysine; alternate occurs at positions 101 and 115. Gly-141 contacts substrate. Position 204 is an N6-succinyllysine (Lys-204). The residue at position 211 (Lys-211) is an N6-acetyllysine.

This sequence belongs to the enoyl-CoA hydratase/isomerase family. In terms of assembly, homohexamer; dimer of trimers. In terms of tissue distribution, detected in liver (at protein level).

It is found in the mitochondrion matrix. The enzyme catalyses a (3S)-3-hydroxyacyl-CoA = a (2E)-enoyl-CoA + H2O. The catalysed reaction is a (3E)-enoyl-CoA = a 4-saturated (2E)-enoyl-CoA. It catalyses the reaction (3E)-hexenoyl-CoA = (2E)-hexenoyl-CoA. It carries out the reaction (3S)-3-hydroxybutanoyl-CoA = (2E)-butenoyl-CoA + H2O. The enzyme catalyses 3-hydroxyisovaleryl-CoA = 3-methylbut-2-enoyl-CoA + H2O. The catalysed reaction is 3-hydroxypropanoyl-CoA = acryloyl-CoA + H2O. It catalyses the reaction 3-hydroxybutanoyl-CoA = (2E)-butenoyl-CoA + H2O. It carries out the reaction 2-methylpropenoyl-CoA + H2O = (S)-3-hydroxyisobutanoyl-CoA. The enzyme catalyses (3S)-hydroxyhexanoyl-CoA = (2E)-hexenoyl-CoA + H2O. The catalysed reaction is (3S)-hydroxydecanoyl-CoA = (2E)-decenoyl-CoA + H2O. It functions in the pathway lipid metabolism; fatty acid beta-oxidation. In terms of biological role, converts unsaturated trans-2-enoyl-CoA species ((2E)-enoyl-CoA) to the corresponding 3(S)-3-hydroxyacyl-CoA species through addition of a water molecule to the double bond. Catalyzes the hydration of medium- and short-chained fatty enoyl-CoA thioesters from 4 carbons long (C4) up to C16. Has high substrate specificity for crotonyl-CoA ((2E)-butenoyl-CoA) and moderate specificity for acryloyl-CoA, 3-methylcrotonyl-CoA (3-methyl-(2E)-butenoyl-CoA) and methacrylyl-CoA ((2E)-2-methylpropenoyl-CoA). Can bind tiglyl-CoA (2-methylcrotonoyl-CoA), but hydrates only a small amount of this substrate. Plays a key role in the beta-oxidation spiral of short- and medium-chain fatty acid oxidation. At a lower rate than the hydratase reaction, catalyzes the isomerase reaction of trans-3-enoyl-CoA species (such as (3E)-hexenoyl-CoA) to trans-2-enoyl-CoA species (such as (2E)-hexenoyl-CoA), which are subsequently hydrated to 3(S)-3-hydroxyacyl-CoA species (such as (3S)-hydroxyhexanoyl-CoA). In Rattus norvegicus (Rat), this protein is Enoyl-CoA hydratase, mitochondrial.